A 257-amino-acid chain; its full sequence is Snake venom serine protease KN8 (257 aa).

An N-terminal signal peptide occupies residues 1 to 18 (MVLIRVLANLLILQLSYA). The propeptide occupies 19–24 (QKSSEL). Positions 25–248 (VVGGLPCNIN…HLDWIKSIIA (224 aa)) constitute a Peptidase S1 domain. Disulfide bonds link cysteine 31/cysteine 162, cysteine 49/cysteine 65, cysteine 141/cysteine 209, cysteine 173/cysteine 188, and cysteine 199/cysteine 224. Residue histidine 64 is the Charge relay system of the active site. Asparagine 102 is a glycosylation site (N-linked (GlcNAc...) asparagine). Residue aspartate 109 is the Charge relay system of the active site. N-linked (GlcNAc...) asparagine glycosylation is found at asparagine 120 and asparagine 121. The active-site Charge relay system is the serine 203.

The protein belongs to the peptidase S1 family. Snake venom subfamily. Monomer. Expressed by the venom gland.

The protein localises to the secreted. Its function is as follows. Snake venom serine protease that may act in the hemostasis system of the prey. This chain is Snake venom serine protease KN8, found in Trimeresurus stejnegeri (Chinese green tree viper).